A 554-amino-acid chain; its full sequence is GPI alpha-1,2-mannosyltransferase 3 (554 aa).

N-linked (GlcNAc...) asparagine glycosylation is present at asparagine 26. The next 9 membrane-spanning stretches (helical) occupy residues 63-83, 136-156, 192-212, 224-244, 255-275, 315-335, 340-360, 362-382, and 387-407; these read LLLF…TSFV, VQLL…VADV, LTNT…PLEG, LVAL…PLLF, DLIL…SLMI, GFPV…YLAP, ILLV…HKEF, FIYP…THLK, and PALS…GLVH. Asparagine 427 carries N-linked (GlcNAc...) asparagine glycosylation.

Belongs to the glycosyltransferase 22 family. PIGB subfamily.

Its subcellular location is the endoplasmic reticulum membrane. Its pathway is glycolipid biosynthesis; glycosylphosphatidylinositol-anchor biosynthesis. In terms of biological role, alpha-1,2-mannosyltransferase that catalyzes the transfer of the third mannose, via an alpha-1,2 bond, from a dolichol-phosphate-mannose (Dol-P-Man) to an alpha-D-Man-(1-&gt;6)-2-PEtn-alpha-D-Man-(1-&gt;4)-alpha-D-GlcN-(1-&gt;6)-(1-radyl,2-acyl-sn-glycero-3-phospho)-2-acyl-inositol intermediate to generate an alpha-D-Man-(1-&gt;2)-alpha-D-Man-(1-&gt;6)-2-PEtn-alpha-D-Man-(1-&gt;4)-alpha-D-GlcN-(1-&gt;6)-(1-radyl,2-acyl-sn-glycero-3-phospho)-2-acyl-inositol (also termed H6) and participates in the nineth step of the glycosylphosphatidylinositol-anchor biosynthesis. May also add the third mannose to an alpha-D-Man-(1-&gt;6)-alpha-D-Man-(1-&gt;4)-alpha-D-GlcN-(1-&gt;6)-(1-radyl,2-acyl-sn-glycero-3-phospho)-2-acyl-inositol (also termed H3) intermediate generating an alpha-D-Man-(1-&gt;2)-alpha-D-Man-(1-&gt;6)-alpha-D-Man-(1-&gt;4)-alpha-D-GlcN-(1-&gt;6)-(1-radyl,2-acyl-sn-glycero-3-phospho)-2-acyl-inositol (also termed H4). The protein is GPI alpha-1,2-mannosyltransferase 3 of Homo sapiens (Human).